Consider the following 243-residue polypeptide: 4-hydroxy-tetrahydrodipicolinate reductase (243 aa).

NAD(+) contacts are provided by residues 9 to 14 (GANGKM), 78 to 80 (GTS), and 104 to 107 (APNF). H134 functions as the Proton donor/acceptor in the catalytic mechanism. H135 lines the (S)-2,3,4,5-tetrahydrodipicolinate pocket. The Proton donor role is filled by K138. 144–145 (GT) is a (S)-2,3,4,5-tetrahydrodipicolinate binding site.

Belongs to the DapB family.

Its subcellular location is the cytoplasm. The enzyme catalyses (S)-2,3,4,5-tetrahydrodipicolinate + NAD(+) + H2O = (2S,4S)-4-hydroxy-2,3,4,5-tetrahydrodipicolinate + NADH + H(+). It carries out the reaction (S)-2,3,4,5-tetrahydrodipicolinate + NADP(+) + H2O = (2S,4S)-4-hydroxy-2,3,4,5-tetrahydrodipicolinate + NADPH + H(+). It functions in the pathway amino-acid biosynthesis; L-lysine biosynthesis via DAP pathway; (S)-tetrahydrodipicolinate from L-aspartate: step 4/4. Its function is as follows. Catalyzes the conversion of 4-hydroxy-tetrahydrodipicolinate (HTPA) to tetrahydrodipicolinate. In Legionella pneumophila (strain Lens), this protein is 4-hydroxy-tetrahydrodipicolinate reductase.